Here is a 504-residue protein sequence, read N- to C-terminus: Anaerobic nitric oxide reductase transcription regulator NorR (504 aa).

Residue D57 is modified to 4-aspartylphosphate. In terms of domain architecture, Sigma-54 factor interaction spans 187–416 (MIGLSPGMTQ…LEHAIHRAVV (230 aa)). ATP contacts are provided by residues 215–222 (GETGTGKE) and 278–287 (ADNGTLFLDE). Residues 479-498 (WAACARMLETDVANLHRLAK) constitute a DNA-binding region (H-T-H motif).

The protein operates within nitrogen metabolism; nitric oxide reduction. Required for the expression of anaerobic nitric oxide (NO) reductase, acts as a transcriptional activator for at least the norVW operon. Activation also requires sigma-54. In Escherichia coli O81 (strain ED1a), this protein is Anaerobic nitric oxide reductase transcription regulator NorR.